A 108-amino-acid polypeptide reads, in one-letter code: Nucleoid-associated protein mma_2329 (108 aa).

It belongs to the YbaB/EbfC family. In terms of assembly, homodimer.

It is found in the cytoplasm. The protein resides in the nucleoid. Functionally, binds to DNA and alters its conformation. May be involved in regulation of gene expression, nucleoid organization and DNA protection. This chain is Nucleoid-associated protein mma_2329, found in Janthinobacterium sp. (strain Marseille) (Minibacterium massiliensis).